Consider the following 93-residue polypeptide: Small ribosomal subunit protein uS19 (93 aa).

Belongs to the universal ribosomal protein uS19 family.

Its function is as follows. Protein S19 forms a complex with S13 that binds strongly to the 16S ribosomal RNA. This Campylobacter lari (strain RM2100 / D67 / ATCC BAA-1060) protein is Small ribosomal subunit protein uS19.